The chain runs to 294 residues: ATP synthase gamma chain (294 aa).

Belongs to the ATPase gamma chain family. In terms of assembly, F-type ATPases have 2 components, CF(1) - the catalytic core - and CF(0) - the membrane proton channel. CF(1) has five subunits: alpha(3), beta(3), gamma(1), delta(1), epsilon(1). CF(0) has three main subunits: a, b and c.

It is found in the cell inner membrane. In terms of biological role, produces ATP from ADP in the presence of a proton gradient across the membrane. The gamma chain is believed to be important in regulating ATPase activity and the flow of protons through the CF(0) complex. The chain is ATP synthase gamma chain from Rhizobium leguminosarum bv. trifolii (strain WSM2304).